The primary structure comprises 119 residues: MVAADQGRGWNPLDGPTWEVLAMPLPLGPATQVPALFSAALVPPVSSLRPNQMLDWQRLKTPHGAPVACSLGLSGEWVPTPCALSILALLGLQLDPLFGLWGCTRTLFWSEWARESRRP.

This is an uncharacterized protein from Homo sapiens (Human).